The primary structure comprises 236 residues: MADS-box transcription factor 3 (236 aa).

In terms of domain architecture, MADS-box spans 1–61 (MGRGKIEIKR…GRLYEYANNS (61 aa)). The 92-residue stretch at 87–178 (AQHYQQESSK…RSKVVENERG (92 aa)) folds into the K-box domain.

In terms of tissue distribution, expressed in lemmas, paleas and lodicules.

It is found in the nucleus. Probable transcription factor involved in the development of floral organs. Acts as C-class protein in association with MADS58. Involved in the control of lodicule number (whorl 2), stamen specification (whorl 3) and floral meristem determinacy (whorl 4), but not in the regulation of carpel morphogenesis. Plays a more predominant role in controlling lodicule development and in specifying stamen identity than MADS58. The chain is MADS-box transcription factor 3 (MADS3) from Oryza sativa subsp. japonica (Rice).